A 125-amino-acid chain; its full sequence is Glutaredoxin-C1 (125 aa).

Positions 19 to 119 constitute a Glutaredoxin domain; the sequence is VNKAKEIVSA…PLLTEAGAIA (101 aa). Cys39 and Cys42 are disulfide-bonded.

Belongs to the glutaredoxin family. CPYC subfamily.

Its subcellular location is the cytoplasm. Its function is as follows. Has a glutathione-disulfide oxidoreductase activity in the presence of NADPH and glutathione reductase. Reduces low molecular weight disulfides and proteins. The chain is Glutaredoxin-C1 (GRXC1) from Arabidopsis thaliana (Mouse-ear cress).